Here is a 329-residue protein sequence, read N- to C-terminus: Protein-arginine N-acetylglucosaminyltransferase NleB1 (329 aa).

Arg13 carries an N-beta-linked (GlcNAc) arginine; by autocatalysis glycan. 48–50 (QWF) lines the UDP-N-acetyl-alpha-D-glucosamine pocket. N-beta-linked (GlcNAc) arginine; by autocatalysis glycosylation occurs at Arg53. Residue Tyr72 coordinates UDP-N-acetyl-alpha-D-glucosamine. An N-beta-linked (GlcNAc) arginine; by autocatalysis glycan is attached at Arg159. 219-222 (YLDA) contributes to the UDP-N-acetyl-alpha-D-glucosamine binding site. Residues 221 to 223 (DAD) carry the DXD motif motif. Asp223 contributes to the Mn(2+) binding site. Glu253 (proton acceptor) is an active-site residue. N-beta-linked (GlcNAc) arginine; by autocatalysis glycosylation occurs at Arg293. 2 residues coordinate Mn(2+): Asn320 and Ser322. UDP-N-acetyl-alpha-D-glucosamine-binding positions include Ser322 and 327 to 329 (SSW).

The protein belongs to the glycosyltransferase NleB family. The cofactor is Mn(2+). In terms of processing, auto-glycosylated: arginine GlcNAcylation is required for activity toward death domain-containing host target proteins.

It localises to the secreted. It is found in the host cytoplasm. The enzyme catalyses L-arginyl-[protein] + UDP-N-acetyl-alpha-D-glucosamine = N(omega)-(N-acetyl-beta-D-glucosaminyl)-L-arginyl-[protein] + UDP + H(+). Functionally, protein-arginine N-acetylglucosaminyltransferase effector that disrupts TNF signaling in infected cells, including NF-kappa-B signaling, apoptosis and necroptosis. Acts by catalyzing the transfer of a single N-acetylglucosamine (GlcNAc) to a conserved arginine residue in the death domain of host proteins FADD, TRADD, FAS, TNFRSF1A/TNFR1, TNFRSF25/DR3 and RIPK1: arginine GlcNAcylation prevents homotypic/heterotypic death domain interactions and assembly of the oligomeric TNF-alpha receptor complex, thereby disrupting TNF signaling. Has preference for host FADD as substrate compared to other death domain-containing proteins. Also acts on host proteins without a death domain: catalyzes arginine GlcNAcylation of HIF1A, thereby regulating host glucose metabolism. Also displays intra-bacterial activity by mediating GlcNAcylation of glutathione synthetase GshB. Catalyzes auto-GlcNAcylation, which is required for activity toward death domain-containing host target proteins. Shows a higher enzymatic activity than NleB2. The chain is Protein-arginine N-acetylglucosaminyltransferase NleB1 from Escherichia coli O127:H6 (strain E2348/69 / EPEC).